A 191-amino-acid chain; its full sequence is Protein GrpE (191 aa).

The segment covering Met-1–Asp-15 has biased composition (basic and acidic residues). The disordered stretch occupies residues Met-1–Glu-35.

It belongs to the GrpE family. As to quaternary structure, homodimer.

It is found in the cytoplasm. Participates actively in the response to hyperosmotic and heat shock by preventing the aggregation of stress-denatured proteins, in association with DnaK and GrpE. It is the nucleotide exchange factor for DnaK and may function as a thermosensor. Unfolded proteins bind initially to DnaJ; upon interaction with the DnaJ-bound protein, DnaK hydrolyzes its bound ATP, resulting in the formation of a stable complex. GrpE releases ADP from DnaK; ATP binding to DnaK triggers the release of the substrate protein, thus completing the reaction cycle. Several rounds of ATP-dependent interactions between DnaJ, DnaK and GrpE are required for fully efficient folding. The polypeptide is Protein GrpE (Francisella philomiragia subsp. philomiragia (strain ATCC 25017 / CCUG 19701 / FSC 153 / O#319-036)).